A 204-amino-acid polypeptide reads, in one-letter code: Rho GDP-dissociation inhibitor 1 (204 aa).

A disordered region spans residues 1 to 36 (MAEQEPTAEQLAQIAAENEEDEHSVNYKPPAQKSIQ). Ala-2 bears the N-acetylalanine mark. At Ser-34 the chain carries Phosphoserine. Residue Lys-43 is modified to N6-acetyllysine. Ser-47 is subject to Phosphoserine. Residues Lys-105 and Lys-127 each carry the N6-acetyllysine modification. Glycyl lysine isopeptide (Lys-Gly) (interchain with G-Cter in SUMO1); alternate cross-links involve residues Lys-138 and Lys-141. Residues Lys-138 and Lys-141 each participate in a glycyl lysine isopeptide (Lys-Gly) (interchain with G-Cter in SUMO2); alternate cross-link. Lys-141 carries the N6-acetyllysine; alternate modification. Lys-141 is subject to N6-succinyllysine; alternate. Lys-178 is subject to N6-acetyllysine.

This sequence belongs to the Rho GDI family. Monomer. Interacts with FER. Interacts with PLXNB3. Forms a heterodimer with RAC1. Interacts with RHOA, the affinity is increased by three orders of magnitude when RHOA is prenylated. Interacts with PSMD10; the interaction increases ARHGDIA association with RHOA, leading to ARHGDIA-mediated inactivation of RHOA and ROCK and prolonged AKT activation. Interacts with KANK2; the interaction is direct and may regulate the interaction of ARHGDIA with RHOA, RAC1 and CDC42. Interacts with RHOC. Interacts with CDC42. Interacts with NGFR (via death domain); NGFR binding decreases the affinity for RHOA.

The protein resides in the cytoplasm. In terms of biological role, controls Rho proteins homeostasis. Regulates the GDP/GTP exchange reaction of the Rho proteins by inhibiting the dissociation of GDP from them, and the subsequent binding of GTP to them. Retains Rho proteins such as CDC42, RAC1 and RHOA in an inactive cytosolic pool, regulating their stability and protecting them from degradation. Actively involved in the recycling and distribution of activated Rho GTPases in the cell, mediates extraction from membranes of both inactive and activated molecules due its exceptionally high affinity for prenylated forms. Through the modulation of Rho proteins, may play a role in cell motility regulation. In glioma cells, inhibits cell migration and invasion by mediating the signals of SEMA5A and PLXNB3 that lead to inactivation of RAC1. The polypeptide is Rho GDP-dissociation inhibitor 1 (ARHGDIA) (Homo sapiens (Human)).